A 188-amino-acid polypeptide reads, in one-letter code: Probable nicotinate-nucleotide adenylyltransferase (188 aa).

It belongs to the NadD family.

The catalysed reaction is nicotinate beta-D-ribonucleotide + ATP + H(+) = deamido-NAD(+) + diphosphate. The protein operates within cofactor biosynthesis; NAD(+) biosynthesis; deamido-NAD(+) from nicotinate D-ribonucleotide: step 1/1. Functionally, catalyzes the reversible adenylation of nicotinate mononucleotide (NaMN) to nicotinic acid adenine dinucleotide (NaAD). In Sulfurovum sp. (strain NBC37-1), this protein is Probable nicotinate-nucleotide adenylyltransferase.